The primary structure comprises 440 residues: Frizzled/smoothened-like sans CRD protein D (440 aa).

Positions 1–27 (MFIILKFLISFFLICNFFNYNDHFASG) are cleaved as a signal peptide. At 28-85 (QTLPPGFCPSPLIYRNSTNRQNDIENGYLFIGQTNCTSPCPSLIFSENEWHRVYNMSL) the chain is on the extracellular side. N-linked (GlcNAc...) asparagine glycosylation is found at Asn43, Asn62, and Asn82. A helical transmembrane segment spans residues 86-106 (IAGTISMFALIFLIITYSPLV). Residues 107–110 (NKYN) are Cytoplasmic-facing. Residues 111–131 (GYTRHTVGILFLFCGIFLTVT) traverse the membrane as a helical segment. Residues 132–162 (TDGRQLWDIDLGFEKYCPEPGRFARQSDTKC) lie on the Extracellular side of the membrane. Residues 163–183 (LVTAIFFQYGCVTSILWWAAI) traverse the membrane as a helical segment. At 184–200 (SVDLWMTIRKVKISKLQ) the chain is on the cytoplasmic side. A helical transmembrane segment spans residues 201–221 (FITYAVILNIITLILTFAPIA). At 222 to 244 (SKQYGYGEAAIGCWLMDLKYQVG) the chain is on the extracellular side. Residues 245-265 (YFWAPVGFCLCVGCVSIVLII) traverse the membrane as a helical segment. At 266-285 (REIYKVSDAIKKKLLAKHLK) the chain is on the cytoplasmic side. The chain crosses the membrane as a helical span at residues 286 to 306 (PLMLIILMLSEFIYMFIFYSY). The Extracellular segment spans residues 307–346 (TTSRRGHYHDVVEKYIRCLFINASNPSICEVDVSISSPAH). The N-linked (GlcNAc...) asparagine glycan is linked to Asn328. Residues 347–367 (FFFHFCMRLMGIEGLIFFGFT) form a helical membrane-spanning segment. The Cytoplasmic segment spans residues 368–440 (RQTKRIWLRS…IELSGVDSKN (73 aa)). The segment at 395–428 (ISSDEKTSNSSHRTTRGCRETEFGESIEQSNDPE) is disordered.

This sequence belongs to the G-protein coupled receptor Fz/Smo family.

The protein resides in the membrane. This chain is Frizzled/smoothened-like sans CRD protein D (fscD), found in Dictyostelium discoideum (Social amoeba).